We begin with the raw amino-acid sequence, 195 residues long: Inhibitor of glycogen debranching 1 (195 aa).

Residues 1–18 are compositionally biased toward polar residues; sequence MTDPHLNTPQVSTSPTFE. Residues 1–101 are disordered; sequence MTDPHLNTPQ…ERRSSGPMDF (101 aa). Serine 64 carries the phosphoserine modification. Threonine 65 is subject to Phosphothreonine. Positions 75 to 95 are enriched in basic and acidic residues; it reads EQARERESSIGEHAPGAERRS. A phosphoserine mark is found at serine 95 and serine 96. Threonine 132 is modified (phosphothreonine). The interval 146–175 is disordered; that stretch reads NSYLDNNSNGNSARVPHGSPPQLGTRRKSS. Over residues 148–157 the composition is skewed to polar residues; it reads YLDNNSNGNS. At serine 164 the chain carries Phosphoserine.

In terms of assembly, interacts with GDB1.

The protein localises to the cytoplasm. In terms of biological role, acts as an inhibitor of GDB1, enhancing the ability of cells to store glucose as glycogen. The polypeptide is Inhibitor of glycogen debranching 1 (IGD1) (Saccharomyces cerevisiae (strain ATCC 204508 / S288c) (Baker's yeast)).